A 121-amino-acid polypeptide reads, in one-letter code: MSISNVSAAKSAYRNALRATRIAFRQDVPVLSSARLQIKDGFTKNRELKDEAEISEAISKLNEVSKFLVQNIVQGEKQEDGKYFLNFHEKTELGDNETIRQGNKANLGSLAGAKVKKCSDN.

The N-terminal 26 residues, 1 to 26, are a transit peptide targeting the mitochondrion; that stretch reads MSISNVSAAKSAYRNALRATRIAFRQ.

This sequence belongs to the complex I LYR family. MZM1 subfamily. In terms of assembly, interacts with RIP1.

Its subcellular location is the mitochondrion matrix. Assembly factor required for Rieske Fe-S protein RIP1 incorporation into the cytochrome b-c1 (CIII) complex. Functions as a chaperone, binding to this subunit within the mitochondrial matrix and stabilizing it prior to its translocation and insertion into the late CIII dimeric intermediate within the mitochondrial inner membrane. Modulates the mitochondrial matrix zinc pool. The sequence is that of Mitochondrial zinc maintenance protein 1, mitochondrial (MZM1) from Scheffersomyces stipitis (strain ATCC 58785 / CBS 6054 / NBRC 10063 / NRRL Y-11545) (Yeast).